Here is a 259-residue protein sequence, read N- to C-terminus: 2-oxoglutaramate amidase (259 aa).

The 236-residue stretch at 3–238 (WTISCLQFDI…EGIVRAEIDL (236 aa)) folds into the CN hydrolase domain. The active-site Proton acceptor is Glu42. Residue Lys111 is the Proton donor of the active site. The active-site Nucleophile is the Cys145.

It belongs to the carbon-nitrogen hydrolase superfamily. NIT1/NIT2 family.

It carries out the reaction 2-oxoglutaramate + H2O = 2-oxoglutarate + NH4(+). Involved in the methylthioribose (MTR) recycling pathway. Probably catalyzes the conversion of 2-oxoglutaramate to 2-oxoglutarate. This Bacillus subtilis (strain 168) protein is 2-oxoglutaramate amidase.